Here is a 245-residue protein sequence, read N- to C-terminus: Cuticle protein (245 aa).

A Chitin-binding type R&amp;R domain is found at 25 to 86; sequence VSYAAAPALV…TGDSKSQQES (62 aa). Residues 79 to 100 form a disordered region; sequence DSKSQQESRSGDVVQGSYSVVD. Repeat copies occupy residues 92-95, 108-111, and 118-121.

Its function is as follows. Component of the cuticle of African malaria mosquito. The chain is Cuticle protein (Ccp84Ab) from Anopheles gambiae (African malaria mosquito).